Here is a 102-residue protein sequence, read N- to C-terminus: Small ribosomal subunit protein uS14 (102 aa).

Belongs to the universal ribosomal protein uS14 family. As to quaternary structure, part of the 30S ribosomal subunit. Contacts proteins S3 and S10.

Binds 16S rRNA, required for the assembly of 30S particles and may also be responsible for determining the conformation of the 16S rRNA at the A site. This chain is Small ribosomal subunit protein uS14, found in Ehrlichia ruminantium (strain Gardel).